Consider the following 369-residue polypeptide: Ferrochelatase (369 aa).

Residues histidine 210 and glutamate 291 each contribute to the Fe cation site.

Belongs to the ferrochelatase family.

Its subcellular location is the cytoplasm. It catalyses the reaction heme b + 2 H(+) = protoporphyrin IX + Fe(2+). Its pathway is porphyrin-containing compound metabolism; protoheme biosynthesis; protoheme from protoporphyrin-IX: step 1/1. In terms of biological role, catalyzes the ferrous insertion into protoporphyrin IX. The protein is Ferrochelatase of Thioalkalivibrio sulfidiphilus (strain HL-EbGR7).